The primary structure comprises 461 residues: Bifunctional protein GlmU (461 aa).

The segment at 1-243 is pyrophosphorylase; the sequence is MNATVPSAAP…EDELRGINSR (243 aa). UDP-N-acetyl-alpha-D-glucosamine is bound by residues 24–27, Lys-38, Gln-86, 91–92, 112–114, Gly-155, Glu-169, Asn-184, and Asn-241; these read LAAG, GT, and YGD. Asp-114 contacts Mg(2+). Asn-241 provides a ligand contact to Mg(2+). The interval 244-264 is linker; that stretch reads AELAEAEACVQRRLRAAALDG. An N-acetyltransferase region spans residues 265–461; it reads GATLVAPETV…AALRRKKEQG (197 aa). Positions 330 and 348 each coordinate UDP-N-acetyl-alpha-D-glucosamine. The active-site Proton acceptor is the His-360. UDP-N-acetyl-alpha-D-glucosamine is bound by residues Tyr-363 and Asn-374. Acetyl-CoA contacts are provided by residues Ala-377, 383–384, Ser-402, Ala-420, and Arg-437; that span reads NY.

The protein in the N-terminal section; belongs to the N-acetylglucosamine-1-phosphate uridyltransferase family. It in the C-terminal section; belongs to the transferase hexapeptide repeat family. In terms of assembly, homotrimer. Mg(2+) is required as a cofactor.

The protein resides in the cytoplasm. It catalyses the reaction alpha-D-glucosamine 1-phosphate + acetyl-CoA = N-acetyl-alpha-D-glucosamine 1-phosphate + CoA + H(+). It carries out the reaction N-acetyl-alpha-D-glucosamine 1-phosphate + UTP + H(+) = UDP-N-acetyl-alpha-D-glucosamine + diphosphate. Its pathway is nucleotide-sugar biosynthesis; UDP-N-acetyl-alpha-D-glucosamine biosynthesis; N-acetyl-alpha-D-glucosamine 1-phosphate from alpha-D-glucosamine 6-phosphate (route II): step 2/2. It participates in nucleotide-sugar biosynthesis; UDP-N-acetyl-alpha-D-glucosamine biosynthesis; UDP-N-acetyl-alpha-D-glucosamine from N-acetyl-alpha-D-glucosamine 1-phosphate: step 1/1. It functions in the pathway bacterial outer membrane biogenesis; LPS lipid A biosynthesis. Functionally, catalyzes the last two sequential reactions in the de novo biosynthetic pathway for UDP-N-acetylglucosamine (UDP-GlcNAc). The C-terminal domain catalyzes the transfer of acetyl group from acetyl coenzyme A to glucosamine-1-phosphate (GlcN-1-P) to produce N-acetylglucosamine-1-phosphate (GlcNAc-1-P), which is converted into UDP-GlcNAc by the transfer of uridine 5-monophosphate (from uridine 5-triphosphate), a reaction catalyzed by the N-terminal domain. The chain is Bifunctional protein GlmU from Gluconacetobacter diazotrophicus (strain ATCC 49037 / DSM 5601 / CCUG 37298 / CIP 103539 / LMG 7603 / PAl5).